The chain runs to 323 residues: MMVPSLALVPGEPAGIGPELCVRLAQQPRSDAHLIAYADPDTLHSAATALSLPVRLLEPDQPARAPGDLPLHPIRQAVATRFGAPDPANAAAVIAGLRSAAADCLAGRLQGIVTGPVHKAAINAGGIAYTGTTELLAEQAGCPVVMMLANSIVRVALVTTHLPLRAVADAITADALLQCLRITHAAMQRDFGLEHPRIAVLGLNPHAGEDGHLGREELDIVIPALEQLRGEGMQLIGPLPADTAFLPQKLRGFDAVVAMYHDQGLPVLKYSGFEQAVNITLGLPYPRVAVDHGTALELAGRGIADPSSLMAATALCARLAARR.

Residue Thr-133 participates in substrate binding. 3 residues coordinate a divalent metal cation: His-161, His-206, and His-261. Substrate-binding residues include Lys-269, Asn-278, and Arg-287.

Belongs to the PdxA family. Homodimer. It depends on Zn(2+) as a cofactor. The cofactor is Mg(2+). Co(2+) is required as a cofactor.

The protein localises to the cytoplasm. It carries out the reaction 4-(phosphooxy)-L-threonine + NAD(+) = 3-amino-2-oxopropyl phosphate + CO2 + NADH. It participates in cofactor biosynthesis; pyridoxine 5'-phosphate biosynthesis; pyridoxine 5'-phosphate from D-erythrose 4-phosphate: step 4/5. Its function is as follows. Catalyzes the NAD(P)-dependent oxidation of 4-(phosphooxy)-L-threonine (HTP) into 2-amino-3-oxo-4-(phosphooxy)butyric acid which spontaneously decarboxylates to form 3-amino-2-oxopropyl phosphate (AHAP). The sequence is that of 4-hydroxythreonine-4-phosphate dehydrogenase from Xanthomonas axonopodis pv. citri (strain 306).